The sequence spans 421 residues: Imidazolonepropionase (421 aa).

2 residues coordinate Fe(3+): histidine 81 and histidine 83. Zn(2+)-binding residues include histidine 81 and histidine 83. The 4-imidazolone-5-propanoate site is built by arginine 90, tyrosine 153, and histidine 186. N-formimidoyl-L-glutamate is bound at residue tyrosine 153. Residue histidine 251 participates in Fe(3+) binding. Histidine 251 provides a ligand contact to Zn(2+). A 4-imidazolone-5-propanoate-binding site is contributed by glutamate 254. Residue aspartate 326 participates in Fe(3+) binding. Position 326 (aspartate 326) interacts with Zn(2+). N-formimidoyl-L-glutamate is bound by residues asparagine 328 and glycine 330. Residue serine 331 coordinates 4-imidazolone-5-propanoate.

This sequence belongs to the metallo-dependent hydrolases superfamily. HutI family. Zn(2+) serves as cofactor. Requires Fe(3+) as cofactor.

It localises to the cytoplasm. The catalysed reaction is 4-imidazolone-5-propanoate + H2O = N-formimidoyl-L-glutamate. Its pathway is amino-acid degradation; L-histidine degradation into L-glutamate; N-formimidoyl-L-glutamate from L-histidine: step 3/3. Its function is as follows. Catalyzes the hydrolytic cleavage of the carbon-nitrogen bond in imidazolone-5-propanoate to yield N-formimidoyl-L-glutamate. It is the third step in the universal histidine degradation pathway. The sequence is that of Imidazolonepropionase from Streptococcus pyogenes serotype M2 (strain MGAS10270).